A 250-amino-acid chain; its full sequence is N-acyl homoserine lactonase (250 aa).

The Zn(2+) site is built by His104, His106, Asp108, His109, His169, Asp191, and His235.

This sequence belongs to the metallo-beta-lactamase superfamily. Monomer. Zn(2+) is required as a cofactor.

It carries out the reaction an N-acyl-L-homoserine lactone + H2O = an N-acyl-L-homoserine + H(+). The sequence is that of N-acyl homoserine lactonase from Bacillus cereus.